Consider the following 544-residue polypeptide: Nucleosome assembly protein 1-like 3 (544 aa).

Disordered stretches follow at residues 1–109 and 168–345; these read MAEA…LFLD and PTEE…KKED. Residues 35–83 show a composition bias toward low complexity; that stretch reads SNSSSSTNSCSSSGSSSSGSSSSSSSSSSSSSSSSSSSSGSSGSSSNGS. Over residues 168-192 the composition is skewed to acidic residues; that stretch reads PTEEECEWNSEEEFSGDEEMQDDTP. Composition is skewed to basic and acidic residues over residues 207–228, 235–277, and 314–332; these read CNEK…PEAK, PKET…KADS, and PARE…EGVN.

Belongs to the nucleosome assembly protein (NAP) family. In terms of tissue distribution, expressed in brain.

It is found in the nucleus. It localises to the cytoplasm. This is Nucleosome assembly protein 1-like 3 (Nap1l3) from Mus musculus (Mouse).